A 91-amino-acid chain; its full sequence is Probable Fe(2+)-trafficking protein (91 aa).

The protein belongs to the Fe(2+)-trafficking protein family. As to quaternary structure, monomer.

Could be a mediator in iron transactions between iron acquisition and iron-requiring processes, such as synthesis and/or repair of Fe-S clusters in biosynthetic enzymes. This is Probable Fe(2+)-trafficking protein from Cronobacter sakazakii (strain ATCC BAA-894) (Enterobacter sakazakii).